The chain runs to 467 residues: tRNA(Ile)-lysidine synthase (467 aa).

35–40 provides a ligand contact to ATP; sequence SGGPDS.

This sequence belongs to the tRNA(Ile)-lysidine synthase family.

The protein resides in the cytoplasm. The enzyme catalyses cytidine(34) in tRNA(Ile2) + L-lysine + ATP = lysidine(34) in tRNA(Ile2) + AMP + diphosphate + H(+). In terms of biological role, ligates lysine onto the cytidine present at position 34 of the AUA codon-specific tRNA(Ile) that contains the anticodon CAU, in an ATP-dependent manner. Cytidine is converted to lysidine, thus changing the amino acid specificity of the tRNA from methionine to isoleucine. The chain is tRNA(Ile)-lysidine synthase from Caldanaerobacter subterraneus subsp. tengcongensis (strain DSM 15242 / JCM 11007 / NBRC 100824 / MB4) (Thermoanaerobacter tengcongensis).